Reading from the N-terminus, the 534-residue chain is CTP synthase (534 aa).

The amidoligase domain stretch occupies residues 1-267 (MSKYIVVTGG…GSYILNRLNI (267 aa)). Serine 13 is a binding site for CTP. Serine 13 is a UTP binding site. 14 to 19 (SIGKGI) is a binding site for ATP. Tyrosine 54 serves as a coordination point for L-glutamine. Position 71 (aspartate 71) interacts with ATP. Residues aspartate 71 and glutamate 141 each coordinate Mg(2+). CTP contacts are provided by residues 148–150 (DIE), 188–193 (KTKPTQ), and lysine 224. UTP-binding positions include 188–193 (KTKPTQ) and lysine 224. The Glutamine amidotransferase type-1 domain occupies 294–532 (KIAVVGKYIE…IKAAKNKKQN (239 aa)). Glycine 353 provides a ligand contact to L-glutamine. Cysteine 380 (nucleophile; for glutamine hydrolysis) is an active-site residue. Residues 381-384 (LGLH), glutamate 403, and arginine 460 contribute to the L-glutamine site. Active-site residues include histidine 505 and glutamate 507.

It belongs to the CTP synthase family. Homotetramer.

It carries out the reaction UTP + L-glutamine + ATP + H2O = CTP + L-glutamate + ADP + phosphate + 2 H(+). The catalysed reaction is L-glutamine + H2O = L-glutamate + NH4(+). It catalyses the reaction UTP + NH4(+) + ATP = CTP + ADP + phosphate + 2 H(+). It participates in pyrimidine metabolism; CTP biosynthesis via de novo pathway; CTP from UDP: step 2/2. With respect to regulation, allosterically activated by GTP, when glutamine is the substrate; GTP has no effect on the reaction when ammonia is the substrate. The allosteric effector GTP functions by stabilizing the protein conformation that binds the tetrahedral intermediate(s) formed during glutamine hydrolysis. Inhibited by the product CTP, via allosteric rather than competitive inhibition. Functionally, catalyzes the ATP-dependent amination of UTP to CTP with either L-glutamine or ammonia as the source of nitrogen. Regulates intracellular CTP levels through interactions with the four ribonucleotide triphosphates. In Methanosphaera stadtmanae (strain ATCC 43021 / DSM 3091 / JCM 11832 / MCB-3), this protein is CTP synthase.